A 207-amino-acid polypeptide reads, in one-letter code: Imidazoleglycerol-phosphate dehydratase (207 aa).

It belongs to the imidazoleglycerol-phosphate dehydratase family.

Its subcellular location is the cytoplasm. It catalyses the reaction D-erythro-1-(imidazol-4-yl)glycerol 3-phosphate = 3-(imidazol-4-yl)-2-oxopropyl phosphate + H2O. The protein operates within amino-acid biosynthesis; L-histidine biosynthesis; L-histidine from 5-phospho-alpha-D-ribose 1-diphosphate: step 6/9. The chain is Imidazoleglycerol-phosphate dehydratase from Mycobacterium avium (strain 104).